Reading from the N-terminus, the 480-residue chain is Protein nucleotidyltransferase YdiU (480 aa).

ATP-binding residues include G86, G88, R89, K109, D121, G122, R172, and R179. D248 serves as the catalytic Proton acceptor. 2 residues coordinate Mg(2+): N249 and D258. D258 lines the ATP pocket.

This sequence belongs to the SELO family. Mg(2+) serves as cofactor. Mn(2+) is required as a cofactor.

It catalyses the reaction L-seryl-[protein] + ATP = 3-O-(5'-adenylyl)-L-seryl-[protein] + diphosphate. It carries out the reaction L-threonyl-[protein] + ATP = 3-O-(5'-adenylyl)-L-threonyl-[protein] + diphosphate. The enzyme catalyses L-tyrosyl-[protein] + ATP = O-(5'-adenylyl)-L-tyrosyl-[protein] + diphosphate. The catalysed reaction is L-histidyl-[protein] + UTP = N(tele)-(5'-uridylyl)-L-histidyl-[protein] + diphosphate. It catalyses the reaction L-seryl-[protein] + UTP = O-(5'-uridylyl)-L-seryl-[protein] + diphosphate. It carries out the reaction L-tyrosyl-[protein] + UTP = O-(5'-uridylyl)-L-tyrosyl-[protein] + diphosphate. Nucleotidyltransferase involved in the post-translational modification of proteins. It can catalyze the addition of adenosine monophosphate (AMP) or uridine monophosphate (UMP) to a protein, resulting in modifications known as AMPylation and UMPylation. This Salmonella schwarzengrund (strain CVM19633) protein is Protein nucleotidyltransferase YdiU.